The chain runs to 303 residues: Pseudouridine-5'-phosphate glycosidase (303 aa).

Glu25 (proton donor) is an active-site residue. Substrate is bound by residues Lys87 and Val107. Residue Asp139 participates in Mn(2+) binding. Substrate is bound at residue 141–143; sequence SAD. The Nucleophile role is filled by Lys160.

The protein belongs to the pseudouridine-5'-phosphate glycosidase family. In terms of assembly, homotrimer. It depends on Mn(2+) as a cofactor.

It carries out the reaction D-ribose 5-phosphate + uracil = psi-UMP + H2O. Its function is as follows. Catalyzes the reversible cleavage of pseudouridine 5'-phosphate (PsiMP) to ribose 5-phosphate and uracil. Functions biologically in the cleavage direction, as part of a pseudouridine degradation pathway. This Hahella chejuensis (strain KCTC 2396) protein is Pseudouridine-5'-phosphate glycosidase.